We begin with the raw amino-acid sequence, 206 residues long: Small ribosomal subunit protein uS4 (206 aa).

The segment covering 1-16 has biased composition (basic and acidic residues); sequence MTKRQESKYKIDRRMG. Residues 1-46 are disordered; that stretch reads MTKRQESKYKIDRRMGENIWGRPKSPVNRREYGPGQHGQRRKGKLS. The S4 RNA-binding domain maps to 94–154; it reads RRLDAVVYRA…EKSKQLAIVL (61 aa).

This sequence belongs to the universal ribosomal protein uS4 family. Part of the 30S ribosomal subunit. Contacts protein S5. The interaction surface between S4 and S5 is involved in control of translational fidelity.

In terms of biological role, one of the primary rRNA binding proteins, it binds directly to 16S rRNA where it nucleates assembly of the body of the 30S subunit. With S5 and S12 plays an important role in translational accuracy. In Parvibaculum lavamentivorans (strain DS-1 / DSM 13023 / NCIMB 13966), this protein is Small ribosomal subunit protein uS4.